A 339-amino-acid chain; its full sequence is STEAP1 protein (339 aa).

A run of 2 helical transmembrane segments spans residues 71–91 and 119–139; these read WHLP…YTLL and PMVS…AAIV. The Ferric oxidoreductase domain maps to 118–265; that stretch reads LPMVSITLLA…KLGIVSLLLG (148 aa). Residues Gln-140 and Arg-161 each coordinate FAD. 2 consecutive transmembrane segments (helical) span residues 164 to 184 and 218 to 238; these read FGLL…SYPM and IYVS…VTSI. Heme b is bound at residue His-175. Residues Ser-237 and Gln-254 each coordinate FAD. 2 helical membrane-spanning segments follow: residues 258-278 and 291-311; these read GIVS…NKWI and FMIA…LFLP. Residue His-268 participates in heme b binding.

Belongs to the STEAP family. Homotrimer. FAD is required as a cofactor. Requires heme b as cofactor. As to expression, ubiquitously expressed. Highly expressed in prostate tumors.

The protein resides in the endosome membrane. It localises to the cell membrane. Does not function as a metalloreductase due to the absence of binding sites for the electron-donating substrate NADPH. Promotes Fe(3+) reduction when fused to the NADPH-binding domain of STEAP4. The chain is STEAP1 protein (STEAP1) from Homo sapiens (Human).